A 745-amino-acid chain; its full sequence is MFDVQREELIWGDRKLVLETGKTARQADGAVVATYGETTVLATVVAAKEPKAGIDFMPLTVNYQERAYAAGRIPGGYFKREGRPSEKETLVSRLIDRPIRPLFVEGWRNDTQVVVTVLSHDLENDPDIVSMVAASAALTLSGVPFMGPIGAARVGYLNGGYKLNPLVTEVAESTLDLVVAGTQDAVLMVESEAKELSEDVMLGAVMFGHKHFQPVIEAIIRLAEKAAKEPRDFSPPENADVEKAVLDICESELRDAYKITVKQDRYKAVDAVKAKVVAALCPAEGEQKFSPEKVKAAFKEAQSKVVRWNILDTGSRIDGRDVKTVRPIVSEVGVLPRAHGSSLFTRGETQALVVATLGTGEDEQFIDALEGTYKERFLLHYNFPPYSVGETGRMGSPGRREIGHGKLAWRAIRPVLPPAHEFPYTIRVVSEITESNGSSSMASVCGGSLSLMDAGVPLRRPVAGIAMGLILEGERFAVLSDILGDEDHLGDMDFKVAGTDEGITSLQMDIKIAGITEEIMRVALAQAKDGRAHILGEMAQALTAARPELGEYAPRIETMQIPTDKIRDVIGTGGKIIREIVEKTGAKINIEDTGVVKIASSDGKAIKAAYNWIRSIVAEPEAGTIYDGTIVKIMEFGAFVNFFGAKDGLVHISELAPQRVAKVGDVVKEGQKVKVKFLGADERGKIRLSMKVVDQETGEDITEKLKAERAERGEPEREERSDRGDRGDRGPRRDRGERRRESSGE.

Asp-487 and Asp-493 together coordinate Mg(2+). The KH domain maps to 554-613; the sequence is PRIETMQIPTDKIRDVIGTGGKIIREIVEKTGAKINIEDTGVVKIASSDGKAIKAAYNWI. The 69-residue stretch at 623–691 folds into the S1 motif domain; that stretch reads GTIYDGTIVK…ERGKIRLSMK (69 aa). Residues 695 to 745 form a disordered region; it reads QETGEDITEKLKAERAERGEPEREERSDRGDRGDRGPRRDRGERRRESSGE. The span at 701-745 shows a compositional bias: basic and acidic residues; that stretch reads ITEKLKAERAERGEPEREERSDRGDRGDRGPRRDRGERRRESSGE.

The protein belongs to the polyribonucleotide nucleotidyltransferase family. It depends on Mg(2+) as a cofactor.

It is found in the cytoplasm. The catalysed reaction is RNA(n+1) + phosphate = RNA(n) + a ribonucleoside 5'-diphosphate. Involved in mRNA degradation. Catalyzes the phosphorolysis of single-stranded polyribonucleotides processively in the 3'- to 5'-direction. The chain is Polyribonucleotide nucleotidyltransferase from Methylorubrum populi (strain ATCC BAA-705 / NCIMB 13946 / BJ001) (Methylobacterium populi).